Consider the following 350-residue polypeptide: Lipase chaperone (350 aa).

The helical transmembrane segment at 12–32 (IVLYLILGCVVVCGVWYSFDV) threads the bilayer.

This sequence belongs to the lipase chaperone family.

The protein localises to the cell inner membrane. May be involved in the folding of the extracellular lipase during its passage through the periplasm. This Xylella fastidiosa (strain 9a5c) protein is Lipase chaperone (lifO).